Consider the following 281-residue polypeptide: Large ribosomal subunit protein uL2 (281 aa).

The disordered stretch occupies residues 208–281; sequence AGRSRYAGQR…RGRKRGPHTR (74 aa). The span at 254–281 shows a compositional bias: basic residues; that stretch reads TVGKKTRSHKARSNKFIVRGRKRGPHTR.

Belongs to the universal ribosomal protein uL2 family. As to quaternary structure, part of the 50S ribosomal subunit. Forms a bridge to the 30S subunit in the 70S ribosome.

In terms of biological role, one of the primary rRNA binding proteins. Required for association of the 30S and 50S subunits to form the 70S ribosome, for tRNA binding and peptide bond formation. It has been suggested to have peptidyltransferase activity; this is somewhat controversial. Makes several contacts with the 16S rRNA in the 70S ribosome. The sequence is that of Large ribosomal subunit protein uL2 from Limosilactobacillus fermentum (strain NBRC 3956 / LMG 18251) (Lactobacillus fermentum).